A 761-amino-acid chain; its full sequence is Isocyanide synthase xanB (761 aa).

Positions Leu24 to His128 are disordered. Positions Glu36–Glu48 are enriched in low complexity. Residues Thr93–Asn102 show a composition bias toward polar residues. A compositionally biased stretch (basic and acidic residues) spans Phe115 to Pro126.

It belongs to the isocyanide synthase family.

Its pathway is secondary metabolite biosynthesis. Isocyanide synthase; part of the gene cluster that mediates the biosynthesis of the isocyanide xanthocillin and its derivatives. The first step of the pathway consists in the conversion of tyrosine into a vinyl-isonitrile intermediate by the isocyanide synthase xanB. Subsequent oxidative dimerization of this intermediate to form xanthocillin may involve the cytochrome P450 monooxygenase xanG, whose expression is coregulated with that of XanB. Xanthocillin can be further modified by the isonitrile hydratase-like protein xanA which introduces N-formyl groups and the methyltransferase xanE which introduces methyl groups, leading to the production of several derivatives including fumiformamide. Finally, fumiformamide can be subject to both oxidative and reductive cyclization to yield melanocins E and F, respectively. The sequence is that of Isocyanide synthase xanB from Aspergillus fumigatus (strain ATCC MYA-4609 / CBS 101355 / FGSC A1100 / Af293) (Neosartorya fumigata).